The sequence spans 149 residues: D-aminoacyl-tRNA deacylase (149 aa).

Positions 137–138 match the Gly-cisPro motif, important for rejection of L-amino acids motif; sequence GP.

The protein belongs to the DTD family. As to quaternary structure, homodimer.

It localises to the cytoplasm. It catalyses the reaction glycyl-tRNA(Ala) + H2O = tRNA(Ala) + glycine + H(+). The enzyme catalyses a D-aminoacyl-tRNA + H2O = a tRNA + a D-alpha-amino acid + H(+). In terms of biological role, an aminoacyl-tRNA editing enzyme that deacylates mischarged D-aminoacyl-tRNAs. Also deacylates mischarged glycyl-tRNA(Ala), protecting cells against glycine mischarging by AlaRS. Acts via tRNA-based rather than protein-based catalysis; rejects L-amino acids rather than detecting D-amino acids in the active site. By recycling D-aminoacyl-tRNA to D-amino acids and free tRNA molecules, this enzyme counteracts the toxicity associated with the formation of D-aminoacyl-tRNA entities in vivo and helps enforce protein L-homochirality. This chain is D-aminoacyl-tRNA deacylase, found in Pediococcus pentosaceus (strain ATCC 25745 / CCUG 21536 / LMG 10740 / 183-1w).